The following is a 362-amino-acid chain: 3-dehydroquinate synthase (362 aa).

NAD(+)-binding positions include 70-75 (DGESYK), 104-108 (GVVGD), 128-129 (TT), K141, and K150. Zn(2+) contacts are provided by E183, H246, and H263.

The protein belongs to the sugar phosphate cyclases superfamily. Dehydroquinate synthase family. It depends on Co(2+) as a cofactor. Requires Zn(2+) as cofactor. NAD(+) is required as a cofactor.

It localises to the cytoplasm. The catalysed reaction is 7-phospho-2-dehydro-3-deoxy-D-arabino-heptonate = 3-dehydroquinate + phosphate. It participates in metabolic intermediate biosynthesis; chorismate biosynthesis; chorismate from D-erythrose 4-phosphate and phosphoenolpyruvate: step 2/7. Functionally, catalyzes the conversion of 3-deoxy-D-arabino-heptulosonate 7-phosphate (DAHP) to dehydroquinate (DHQ). The chain is 3-dehydroquinate synthase from Saccharophagus degradans (strain 2-40 / ATCC 43961 / DSM 17024).